We begin with the raw amino-acid sequence, 197 residues long: RNA pyrophosphohydrolase (197 aa).

The 144-residue stretch at 6-149 (GYRPNVGIVI…KRDVYRRAMK (144 aa)) folds into the Nudix hydrolase domain. Residues 38 to 59 (GGINEGETPEQAMFRELFEEVG) carry the Nudix box motif. Residues 170 to 197 (ETKKAETGKKQPYYHKYAPQNKKGRKRR) form a disordered region.

Belongs to the Nudix hydrolase family. RppH subfamily. The cofactor is a divalent metal cation.

Accelerates the degradation of transcripts by removing pyrophosphate from the 5'-end of triphosphorylated RNA, leading to a more labile monophosphorylated state that can stimulate subsequent ribonuclease cleavage. In Actinobacillus succinogenes (strain ATCC 55618 / DSM 22257 / CCUG 43843 / 130Z), this protein is RNA pyrophosphohydrolase.